The sequence spans 496 residues: Cytochrome P450 71D180 (496 aa).

A helical; Signal-anchor for type II membrane protein transmembrane segment spans residues 1-21; it reads MDISISWVVIIVFVLSYLILM. A heme-binding site is contributed by C435. The segment at 471–496 is disordered; it reads MSETPGLSGPRKNPLIMIPTIHNPTS.

This sequence belongs to the cytochrome P450 family. It depends on heme as a cofactor. As to expression, mostly expressed in flowers and stems, and, to a lower extent, in leaves.

It localises to the membrane. It catalyses the reaction gamma-terpinene + 2 reduced [NADPH--hemoprotein reductase] + 2 O2 = carvacrol + 2 oxidized [NADPH--hemoprotein reductase] + 3 H2O + 2 H(+). The catalysed reaction is (4S)-limonene + reduced [NADPH--hemoprotein reductase] + O2 = (1S,5R)-carveol + oxidized [NADPH--hemoprotein reductase] + H2O + H(+). It carries out the reaction (4R)-limonene + reduced [NADPH--hemoprotein reductase] + O2 = (1R,5S)-carveol + oxidized [NADPH--hemoprotein reductase] + H2O + H(+). Its pathway is secondary metabolite biosynthesis; terpenoid biosynthesis. In terms of biological role, involved in the biosynthesis of phenolic monoterpenes natural products thymol and carvacrol which have a broad range of biological activities acting as antimicrobial compounds, insecticides, antioxidants and pharmaceutical agents. Catalyzes the C2-hydroxylation of gamma-terpinene to produce carvacrol. Also mediates the C6-hydroxylation of (4S)-limonene and (4R)-limonene to form carveol. This chain is Cytochrome P450 71D180, found in Origanum vulgare (Wild marjoram).